Here is a 629-residue protein sequence, read N- to C-terminus: Microtubule-associated protein 70-3 (629 aa).

Residues 1-54 form a disordered region; the sequence is MEEGGYAFEVNNGRPTASEFGTTARISSPSLTMSSSFREGGGGGGSKGLTRRRS. Residues 13–33 are compositionally biased toward polar residues; the sequence is GRPTASEFGTTARISSPSLTM. Positions 75–375 form a coiled coil; sequence VKVELNRLEN…ADRAAKSEAQ (301 aa). A required for targeting to microtubules region spans residues 257 to 493; the sequence is ILDKLHRQKV…FPLNQSSEGT (237 aa). Disordered stretches follow at residues 391 to 421, 458 to 519, and 578 to 629; these read LRGP…LGGA, GTSR…DSVP, and AMEK…RSTQ. Residues 393-416 show a composition bias toward polar residues; sequence GPSSSGNRSTPEGRSMSNGPSRRQ. A coiled-coil region spans residues 544–592; that stretch reads LRDKDEAIEMLAKKVETLTKAMEVEAKKMRREVAAMEKEVSAMRVDNKG. Basic and acidic residues predominate over residues 578 to 596; that stretch reads AMEKEVSAMRVDNKGSDSR. Polar residues predominate over residues 603–613; it reads NSKGASTTAQL.

This sequence belongs to the MAP70 family.

The protein localises to the cytoplasm. It localises to the cytoskeleton. In terms of biological role, plant-specific protein that interact with microtubules. This Arabidopsis thaliana (Mouse-ear cress) protein is Microtubule-associated protein 70-3 (MAP70.3).